The following is a 160-amino-acid chain: Transcription elongation factor GreA (160 aa).

Residues 12-76 (EGVKKLEEEL…QLENMLKNAS (65 aa)) are a coiled coil.

This sequence belongs to the GreA/GreB family.

In terms of biological role, necessary for efficient RNA polymerase transcription elongation past template-encoded arresting sites. The arresting sites in DNA have the property of trapping a certain fraction of elongating RNA polymerases that pass through, resulting in locked ternary complexes. Cleavage of the nascent transcript by cleavage factors such as GreA or GreB allows the resumption of elongation from the new 3'terminus. GreA releases sequences of 2 to 3 nucleotides. The protein is Transcription elongation factor GreA of Clostridium botulinum (strain Kyoto / Type A2).